A 285-amino-acid chain; its full sequence is Bifunctional protein FolD (285 aa).

NADP(+)-binding positions include 169–171 (GRS), S194, and I235.

It belongs to the tetrahydrofolate dehydrogenase/cyclohydrolase family. As to quaternary structure, homodimer.

It catalyses the reaction (6R)-5,10-methylene-5,6,7,8-tetrahydrofolate + NADP(+) = (6R)-5,10-methenyltetrahydrofolate + NADPH. The catalysed reaction is (6R)-5,10-methenyltetrahydrofolate + H2O = (6R)-10-formyltetrahydrofolate + H(+). Its pathway is one-carbon metabolism; tetrahydrofolate interconversion. In terms of biological role, catalyzes the oxidation of 5,10-methylenetetrahydrofolate to 5,10-methenyltetrahydrofolate and then the hydrolysis of 5,10-methenyltetrahydrofolate to 10-formyltetrahydrofolate. The chain is Bifunctional protein FolD from Microcystis aeruginosa (strain NIES-843 / IAM M-2473).